Consider the following 494-residue polypeptide: UDP-N-acetylmuramate--L-alanine ligase (494 aa).

134-140 (GSHGKTT) contacts ATP.

This sequence belongs to the MurCDEF family.

It localises to the cytoplasm. It carries out the reaction UDP-N-acetyl-alpha-D-muramate + L-alanine + ATP = UDP-N-acetyl-alpha-D-muramoyl-L-alanine + ADP + phosphate + H(+). Its pathway is cell wall biogenesis; peptidoglycan biosynthesis. Functionally, cell wall formation. The polypeptide is UDP-N-acetylmuramate--L-alanine ligase (Prochlorococcus marinus (strain NATL1A)).